The primary structure comprises 172 residues: 3-hydroxydecanoyl-[acyl-carrier-protein] dehydratase (172 aa).

The active site involves histidine 71.

This sequence belongs to the thioester dehydratase family. FabA subfamily. As to quaternary structure, homodimer.

The protein resides in the cytoplasm. The enzyme catalyses a (3R)-hydroxyacyl-[ACP] = a (2E)-enoyl-[ACP] + H2O. The catalysed reaction is (3R)-hydroxydecanoyl-[ACP] = (2E)-decenoyl-[ACP] + H2O. It catalyses the reaction (2E)-decenoyl-[ACP] = (3Z)-decenoyl-[ACP]. The protein operates within lipid metabolism; fatty acid biosynthesis. Its function is as follows. Necessary for the introduction of cis unsaturation into fatty acids. Catalyzes the dehydration of (3R)-3-hydroxydecanoyl-ACP to E-(2)-decenoyl-ACP and then its isomerization to Z-(3)-decenoyl-ACP. Can catalyze the dehydratase reaction for beta-hydroxyacyl-ACPs with saturated chain lengths up to 16:0, being most active on intermediate chain length. The chain is 3-hydroxydecanoyl-[acyl-carrier-protein] dehydratase from Klebsiella pneumoniae (strain 342).